The primary structure comprises 310 residues: Methionyl-tRNA formyltransferase (310 aa).

109–112 provides a ligand contact to (6S)-5,6,7,8-tetrahydrofolate; the sequence is SLLP.

It belongs to the Fmt family.

The enzyme catalyses L-methionyl-tRNA(fMet) + (6R)-10-formyltetrahydrofolate = N-formyl-L-methionyl-tRNA(fMet) + (6S)-5,6,7,8-tetrahydrofolate + H(+). In terms of biological role, attaches a formyl group to the free amino group of methionyl-tRNA(fMet). The formyl group appears to play a dual role in the initiator identity of N-formylmethionyl-tRNA by promoting its recognition by IF2 and preventing the misappropriation of this tRNA by the elongation apparatus. This chain is Methionyl-tRNA formyltransferase, found in Pseudomonas putida (strain GB-1).